The following is a 681-amino-acid chain: Probable L-type lectin-domain containing receptor kinase VII.2 (681 aa).

The signal sequence occupies residues 1–23; that stretch reads MFSKVSILLFSLASLLLFRSTTG. The segment at 24 to 260 is legume-lectin like; sequence IEFIYNSNFT…SHRILSWSFS (237 aa). The Extracellular segment spans residues 24–290; that stretch reads IEFIYNSNFT…SGDSVLKSKG (267 aa). 9 N-linked (GlcNAc...) asparagine glycosylation sites follow: asparagine 31, asparagine 42, asparagine 56, asparagine 72, asparagine 126, asparagine 202, asparagine 207, asparagine 228, and asparagine 263. Residues 291–311 traverse the membrane as a helical segment; it reads FIAGVSSGVVLLVSVIGLLCF. Topologically, residues 312–681 are cytoplasmic; it reads YVVRRRRQRL…QTYDSILHGR (370 aa). Residues 349-624 enclose the Protein kinase domain; sequence FSDENMIGYG…VVQILEQGRL (276 aa). ATP-binding positions include 355 to 363 and lysine 376; that span reads IGYGGNSKV. Aspartate 475 functions as the Proton acceptor in the catalytic mechanism.

The protein in the C-terminal section; belongs to the protein kinase superfamily. Ser/Thr protein kinase family. It in the N-terminal section; belongs to the leguminous lectin family.

The protein localises to the cell membrane. The catalysed reaction is L-seryl-[protein] + ATP = O-phospho-L-seryl-[protein] + ADP + H(+). It carries out the reaction L-threonyl-[protein] + ATP = O-phospho-L-threonyl-[protein] + ADP + H(+). The sequence is that of Probable L-type lectin-domain containing receptor kinase VII.2 (LECRK72) from Arabidopsis thaliana (Mouse-ear cress).